Consider the following 123-residue polypeptide: Histone H2B.1, embryonic (123 aa).

The disordered stretch occupies residues 1 to 32; sequence MAPTGQVAKKGSKKAVKPPRASGGKKRHRKRK. Positions 10–32 are enriched in basic residues; that stretch reads KGSKKAVKPPRASGGKKRHRKRK. Ser110 carries O-linked (GlcNAc) serine glycosylation. Residue Lys118 forms a Glycyl lysine isopeptide (Lys-Gly) (interchain with G-Cter in ubiquitin) linkage.

Belongs to the histone H2B family. As to quaternary structure, the nucleosome is a histone octamer containing two molecules each of H2A, H2B, H3 and H4 assembled in one H3-H4 heterotetramer and two H2A-H2B heterodimers. The octamer wraps approximately 147 bp of DNA. Monoubiquitination of Lys-118 gives a specific tag for epigenetic transcriptional activation and is also prerequisite for histone H3 'Lys-4' and 'Lys-79' methylation. In terms of processing, glcNAcylation at Ser-110 promotes monoubiquitination of Lys-118. It fluctuates in response to extracellular glucose, and associates with transcribed genes.

The protein resides in the nucleus. Its subcellular location is the chromosome. Core component of nucleosome. Nucleosomes wrap and compact DNA into chromatin, limiting DNA accessibility to the cellular machineries which require DNA as a template. Histones thereby play a central role in transcription regulation, DNA repair, DNA replication and chromosomal stability. DNA accessibility is regulated via a complex set of post-translational modifications of histones, also called histone code, and nucleosome remodeling. The sequence is that of Histone H2B.1, embryonic from Psammechinus miliaris (Green sea urchin).